We begin with the raw amino-acid sequence, 343 residues long: ATP-dependent 6-phosphofructokinase (343 aa).

Residues Gly-10 and 103 to 106 (GEGT) each bind ATP. Glu-104 contributes to the Mg(2+) binding site. Residues 126 to 128 (TID), Arg-163, 170 to 172 (MGR), Glu-223, Arg-267, and 273 to 276 (HVQR) contribute to the substrate site. The Proton acceptor role is filled by Asp-128.

Belongs to the phosphofructokinase type A (PFKA) family. Mixed-substrate PFK group III subfamily. In terms of assembly, homodimer or homotetramer. Mg(2+) is required as a cofactor.

The protein localises to the cytoplasm. The catalysed reaction is beta-D-fructose 6-phosphate + ATP = beta-D-fructose 1,6-bisphosphate + ADP + H(+). It functions in the pathway carbohydrate degradation; glycolysis; D-glyceraldehyde 3-phosphate and glycerone phosphate from D-glucose: step 3/4. Its function is as follows. Catalyzes the phosphorylation of D-fructose 6-phosphate to fructose 1,6-bisphosphate by ATP, the first committing step of glycolysis. The protein is ATP-dependent 6-phosphofructokinase of Mycobacterium leprae (strain TN).